The chain runs to 211 residues: Secreted phosphoprotein 24 (211 aa).

Positions 1-29 (MISRMEKMTMMMKILIMFALGMNYWSCSG) are cleaved as a signal peptide. 2 disulfide bridges follow: Cys92–Cys103 and Cys116–Cys134. Ser96 is modified (phosphoserine). Residues Ser145, Ser146, Ser170, Ser173, and Ser182 each carry the phosphoserine modification.

This sequence belongs to the SPP2 family. Post-translationally, phosphorylation sites are present in the extracellular medium. In terms of tissue distribution, detected in liver and plasma.

The protein localises to the secreted. Functionally, could coordinate an aspect of bone turnover. This chain is Secreted phosphoprotein 24 (SPP2), found in Homo sapiens (Human).